The chain runs to 259 residues: DNA adenine methylase (259 aa).

Residues Tyr-7, Lys-11, 32-37 (FCGGLS), Asp-50, 156-157 (HF), Asp-171, and Tyr-181 contribute to the S-adenosyl-L-methionine site.

The protein belongs to the N(4)/N(6)-methyltransferase family. As to quaternary structure, monomer.

It catalyses the reaction a 2'-deoxyadenosine in DNA + S-adenosyl-L-methionine = an N(6)-methyl-2'-deoxyadenosine in DNA + S-adenosyl-L-homocysteine + H(+). In terms of biological role, an alpha subtype methylase, recognizes the double-stranded sequence 5'-GATC-3' and methylates A-2. Also acts on 5-hydroxymethylcytosine (hmC)-containing DNA, the normal base in this virus. May prevent degradation of viral DNA by the host restriction-modification antiviral defense system. This chain is DNA adenine methylase, found in Enterobacteria phage T4 (Bacteriophage T4).